The chain runs to 405 residues: Acetylornithine aminotransferase 1 (405 aa).

Pyridoxal 5'-phosphate is bound by residues 103–104 and F136; that span reads GA. Position 139 (R139) interacts with N(2)-acetyl-L-ornithine. 221–224 contacts pyridoxal 5'-phosphate; the sequence is DEVQ. Position 250 is an N6-(pyridoxal phosphate)lysine (K250). N(2)-acetyl-L-ornithine is bound at residue S278. Position 279 (T279) interacts with pyridoxal 5'-phosphate.

The protein belongs to the class-III pyridoxal-phosphate-dependent aminotransferase family. ArgD subfamily. In terms of assembly, homodimer. Requires pyridoxal 5'-phosphate as cofactor.

It localises to the cytoplasm. It catalyses the reaction N(2)-acetyl-L-ornithine + 2-oxoglutarate = N-acetyl-L-glutamate 5-semialdehyde + L-glutamate. It participates in amino-acid biosynthesis; L-arginine biosynthesis; N(2)-acetyl-L-ornithine from L-glutamate: step 4/4. The chain is Acetylornithine aminotransferase 1 from Bradyrhizobium diazoefficiens (strain JCM 10833 / BCRC 13528 / IAM 13628 / NBRC 14792 / USDA 110).